Consider the following 285-residue polypeptide: sn-2 palmitoyl-lipid 9-desaturase (285 aa).

A run of 2 helical transmembrane segments spans residues 20–40 (WINV…PWFF) and 44–64 (ALGL…CLGY). The Histidine box-1 signature appears at 65-70 (HRLLSH). Residues 81–101 (YAIALIGALALQGGPIFWVGG) form a helical membrane-spanning segment. The Histidine box-2 motif lies at 102-106 (HRQHH). A helical transmembrane segment spans residues 169 to 189 (IPFALLLYVLGGWPFVFYGVF). A Histidine box-3 motif is present at residues 239 to 243 (HHTYP).

It belongs to the fatty acid desaturase type 2 family. It depends on Fe(2+) as a cofactor.

The protein localises to the membrane. The enzyme catalyses a 1-acyl-2-hexadecanoyl-glycerolipid + 2 reduced [2Fe-2S]-[ferredoxin] + O2 + 2 H(+) = a 1-acyl-2-[(9Z)-hexadecenoyl]-glycerolipid + 2 oxidized [2Fe-2S]-[ferredoxin] + 2 H2O. It participates in lipid metabolism; fatty acid biosynthesis. In terms of biological role, desaturase involved in fatty acid biosynthesis. Introduces a double bond at carbon 9 of palmitoyl groups (16:0) attached to the sn-2 position of the glycerol moiety of membrane glycerolipids. The sequence is that of sn-2 palmitoyl-lipid 9-desaturase from Nostoc sp. (strain 36).